We begin with the raw amino-acid sequence, 447 residues long: Alpha-1,6-mannosyl-glycoprotein 2-beta-N-acetylglucosaminyltransferase (447 aa).

Residues 1 to 9 (MRFRIYKRK) lie on the Cytoplasmic side of the membrane. A helical; Signal-anchor for type II membrane protein transmembrane segment spans residues 10-29 (VLILTLVVAACGFVLWSSNG). The Lumenal segment spans residues 30-447 (RQRKNEALAP…ELCKSYRRLQ (418 aa)). Asn-69 and Asn-86 each carry an N-linked (GlcNAc...) asparagine glycan. Substrate contacts are provided by residues 123–127 (QVHNR) and Asp-154. Cys-196 and Cys-210 are disulfide-bonded. 229–233 (QTKHH) provides a ligand contact to substrate. Mn(2+) is bound at residue Asp-261. Residues Cys-283 and Cys-286 are joined by a disulfide bond. Residue Arg-298 coordinates substrate. Intrachain disulfides connect Cys-334-Cys-357, Cys-339-Cys-440, and Cys-378-Cys-386. A Mn(2+)-binding site is contributed by His-374.

The protein belongs to the glycosyltransferase 16 (GT16) protein family. As to quaternary structure, homodimer. Requires Mn(2+) as cofactor.

The protein resides in the golgi apparatus membrane. The catalysed reaction is an N(4)-{beta-D-GlcNAc-(1-&gt;2)-alpha-D-Man-(1-&gt;3)-[alpha-D-Man-(1-&gt;6)]-beta-D-Man-(1-&gt;4)-beta-D-GlcNAc-(1-&gt;4)-beta-D-GlcNAc}-L-asparaginyl-[protein] + UDP-N-acetyl-alpha-D-glucosamine = N(4)-{beta-D-GlcNAc-(1-&gt;2)-alpha-D-Man-(1-&gt;3)-[beta-D-GlcNAc-(1-&gt;2)-alpha-D-Man-(1-&gt;6)]-beta-D-Man-(1-&gt;4)-beta-D-GlcNAc-(1-&gt;4)-beta-D-GlcNAc}-L-asparaginyl-[protein] + UDP + H(+). It functions in the pathway protein modification; protein glycosylation. Functionally, plays an essential role in protein N-glycosylation. Catalyzes the transfer of N-acetylglucosamine (GlcNAc) onto the free terminal mannose moiety in the core structure of the nascent N-linked glycan chain, giving rise to the second branch in complex glycans. This Homo sapiens (Human) protein is Alpha-1,6-mannosyl-glycoprotein 2-beta-N-acetylglucosaminyltransferase (MGAT2).